A 214-amino-acid chain; its full sequence is Probable nicotinate-nucleotide adenylyltransferase (214 aa).

It belongs to the NadD family.

The enzyme catalyses nicotinate beta-D-ribonucleotide + ATP + H(+) = deamido-NAD(+) + diphosphate. It participates in cofactor biosynthesis; NAD(+) biosynthesis; deamido-NAD(+) from nicotinate D-ribonucleotide: step 1/1. Functionally, catalyzes the reversible adenylation of nicotinate mononucleotide (NaMN) to nicotinic acid adenine dinucleotide (NaAD). The polypeptide is Probable nicotinate-nucleotide adenylyltransferase (Rubrobacter xylanophilus (strain DSM 9941 / JCM 11954 / NBRC 16129 / PRD-1)).